Here is a 308-residue protein sequence, read N- to C-terminus: Ectoine dioxygenase (308 aa).

Gln131 provides a ligand contact to L-ectoine. Lys137 lines the 2-oxoglutarate pocket. Residues His148, Asp150, and His249 each contribute to the Fe cation site.

The protein belongs to the PhyH family. EctD subfamily. As to quaternary structure, homodimer. Fe(2+) is required as a cofactor.

The catalysed reaction is L-ectoine + 2-oxoglutarate + O2 = 5-hydroxyectoine + succinate + CO2. Involved in the biosynthesis of 5-hydroxyectoine, called compatible solute, which helps organisms to survive extreme osmotic stress by acting as a highly soluble organic osmolyte. Catalyzes the 2-oxoglutarate-dependent selective hydroxylation of L-ectoine to yield (4S,5S)-5-hydroxyectoine. This Bordetella bronchiseptica (strain ATCC BAA-588 / NCTC 13252 / RB50) (Alcaligenes bronchisepticus) protein is Ectoine dioxygenase.